A 345-amino-acid chain; its full sequence is N-acetyl-gamma-glutamyl-phosphate reductase (345 aa).

Cysteine 149 is a catalytic residue.

This sequence belongs to the NAGSA dehydrogenase family. Type 1 subfamily.

It localises to the cytoplasm. The catalysed reaction is N-acetyl-L-glutamate 5-semialdehyde + phosphate + NADP(+) = N-acetyl-L-glutamyl 5-phosphate + NADPH + H(+). It functions in the pathway amino-acid biosynthesis; L-arginine biosynthesis; N(2)-acetyl-L-ornithine from L-glutamate: step 3/4. Its function is as follows. Catalyzes the NADPH-dependent reduction of N-acetyl-5-glutamyl phosphate to yield N-acetyl-L-glutamate 5-semialdehyde. The polypeptide is N-acetyl-gamma-glutamyl-phosphate reductase (Bacillus anthracis).